Consider the following 466-residue polypeptide: MELGKTKSVHIVGIGGAGMSAIAELLLTSGFGVTGSDLSSGEVTERLSERGAVIYQGHKAEQVGESDVVVYSSAIRPAENVEIVAAEQAGIPVIKRDEMLGELMRYNYGVCVSGTHGKTTTTAMIATMLIEAGESPTVMIGGVSDYLKGSTVVGSGKYLVIEADEFDRAFLKLTPTIAVINSLESEHMDTYGTIEELRKAFIAFANKVPFYGRVICCVDWPEIRKLIPHLNRRYTTFGIDEPADVMASDMVMDKNRSRFTVRASGKEYPGVSLNVPGRHNVMNALAAFASGLELGIAPERIIAGLTRYSGMRRRFQIKYDNSAGVLVVDDYAHHPSEVKAAVKAARDGWPNAEIVAVFQPHLFSRTREFADEYGWALLRADKIYVADIYPSREKAADYPGVSGSLVAAAVHKAGGKHAEFIADRELLYQTVETCPQKSTVVLFMGAGDITHLSTRLAGEWINKFSA.

114–120 (GTHGKTT) contacts ATP.

The protein belongs to the MurCDEF family.

Its subcellular location is the cytoplasm. The enzyme catalyses UDP-N-acetyl-alpha-D-muramate + L-alanine + ATP = UDP-N-acetyl-alpha-D-muramoyl-L-alanine + ADP + phosphate + H(+). It participates in cell wall biogenesis; peptidoglycan biosynthesis. Functionally, cell wall formation. The polypeptide is UDP-N-acetylmuramate--L-alanine ligase (Chlorobium phaeobacteroides (strain DSM 266 / SMG 266 / 2430)).